The chain runs to 203 residues: Histidine biosynthesis bifunctional protein HisIE (203 aa).

Residues 1–114 (MLTEQQRREL…FGDASHQWLF (114 aa)) are phosphoribosyl-AMP cyclohydrolase. Residues 115 to 203 (LYQLEQLLAE…VIDNLRKRHQ (89 aa)) are phosphoribosyl-ATP pyrophosphohydrolase.

This sequence in the N-terminal section; belongs to the PRA-CH family. The protein in the C-terminal section; belongs to the PRA-PH family.

Its subcellular location is the cytoplasm. The catalysed reaction is 1-(5-phospho-beta-D-ribosyl)-ATP + H2O = 1-(5-phospho-beta-D-ribosyl)-5'-AMP + diphosphate + H(+). The enzyme catalyses 1-(5-phospho-beta-D-ribosyl)-5'-AMP + H2O = 1-(5-phospho-beta-D-ribosyl)-5-[(5-phospho-beta-D-ribosylamino)methylideneamino]imidazole-4-carboxamide. It participates in amino-acid biosynthesis; L-histidine biosynthesis; L-histidine from 5-phospho-alpha-D-ribose 1-diphosphate: step 2/9. Its pathway is amino-acid biosynthesis; L-histidine biosynthesis; L-histidine from 5-phospho-alpha-D-ribose 1-diphosphate: step 3/9. The chain is Histidine biosynthesis bifunctional protein HisIE (hisI) from Salmonella typhimurium (strain LT2 / SGSC1412 / ATCC 700720).